The sequence spans 646 residues: Translation initiation factor IF-2 (646 aa).

One can recognise a tr-type G domain in the interval 146 to 315 (PRPPVVTVMG…LLVAEMEELR (170 aa)). The tract at residues 155–162 (GHVDHGKT) is G1. A GTP-binding site is contributed by 155–162 (GHVDHGKT). The tract at residues 180 to 184 (GITQH) is G2. The G3 stretch occupies residues 201 to 204 (DTPG). GTP contacts are provided by residues 201–205 (DTPGH) and 255–258 (NKID). A G4 region spans residues 255–258 (NKID). Residues 291 to 293 (SAK) are G5.

It belongs to the TRAFAC class translation factor GTPase superfamily. Classic translation factor GTPase family. IF-2 subfamily.

It is found in the cytoplasm. Its function is as follows. One of the essential components for the initiation of protein synthesis. Protects formylmethionyl-tRNA from spontaneous hydrolysis and promotes its binding to the 30S ribosomal subunits. Also involved in the hydrolysis of GTP during the formation of the 70S ribosomal complex. This chain is Translation initiation factor IF-2, found in Clostridioides difficile (strain 630) (Peptoclostridium difficile).